Consider the following 522-residue polypeptide: DNA primase DnaG (522 aa).

The Toprim domain occupies 171–257 (DAIIILEGRA…CVEDLVQKEI (87 aa)). Residues Glu-177, Asp-219, and Asp-221 each contribute to the Mg(2+) site.

The protein belongs to the archaeal DnaG primase family. In terms of assembly, forms a ternary complex with MCM helicase and DNA. Component of the archaeal exosome complex. Mg(2+) is required as a cofactor.

The enzyme catalyses ssDNA + n NTP = ssDNA/pppN(pN)n-1 hybrid + (n-1) diphosphate.. In terms of biological role, RNA polymerase that catalyzes the synthesis of short RNA molecules used as primers for DNA polymerase during DNA replication. Also part of the exosome, which is a complex involved in RNA degradation. Acts as a poly(A)-binding protein that enhances the interaction between heteromeric, adenine-rich transcripts and the exosome. This chain is DNA primase DnaG, found in Methanosarcina mazei (strain ATCC BAA-159 / DSM 3647 / Goe1 / Go1 / JCM 11833 / OCM 88) (Methanosarcina frisia).